Here is a 108-residue protein sequence, read N- to C-terminus: Nucleoid-associated protein Pmen_2646 (108 aa).

Residues 1–25 form a disordered region; the sequence is MMKGGMAGLMKQAQQMQEKMQKMQE.

It belongs to the YbaB/EbfC family. In terms of assembly, homodimer.

It is found in the cytoplasm. The protein localises to the nucleoid. Functionally, binds to DNA and alters its conformation. May be involved in regulation of gene expression, nucleoid organization and DNA protection. This is Nucleoid-associated protein Pmen_2646 from Ectopseudomonas mendocina (strain ymp) (Pseudomonas mendocina).